The following is a 224-amino-acid chain: Ribose-5-phosphate isomerase A (224 aa).

Substrate contacts are provided by residues 34-37 (TGST), 87-90 (DGAD), and 100-103 (KGGG). E109 functions as the Proton acceptor in the catalytic mechanism. Residue K127 coordinates substrate.

Belongs to the ribose 5-phosphate isomerase family. Homodimer.

It catalyses the reaction aldehydo-D-ribose 5-phosphate = D-ribulose 5-phosphate. It functions in the pathway carbohydrate degradation; pentose phosphate pathway; D-ribose 5-phosphate from D-ribulose 5-phosphate (non-oxidative stage): step 1/1. Functionally, catalyzes the reversible conversion of ribose-5-phosphate to ribulose 5-phosphate. The protein is Ribose-5-phosphate isomerase A of Francisella tularensis subsp. novicida (strain U112).